A 451-amino-acid polypeptide reads, in one-letter code: Phenolic glucoside malonyltransferase 2 (451 aa).

Catalysis depends on His-165, which acts as the Proton acceptor. The HXXXD motif motif lies at 165–169 (HAVLD). Malonyl-CoA-binding positions include His-270 and 272-273 (ST). The active-site Proton acceptor is Asp-395. A DFGWG motif motif is present at residues 395–399 (DFGWG).

The protein belongs to the plant acyltransferase family. Phenolic glucoside malonyltransferase subfamily.

It carries out the reaction a flavonol 7-O-beta-D-glucoside + malonyl-CoA = a flavonol 7-O-(6-O-malonyl-beta-D-glucoside) + CoA. Functionally, malonyltransferase acting on xenobiotic glucosides. Has activity toward 2-Naphthol glucoside (2NAG), 1-Naphthol glucoside (1NAG), kaempferol 7-O-glucoside, hydroxycoumarin glucosides and phenol-glucosides, but not toward kaempferol 3-O-glucoside or daidzin. Prefers phenol glucosides rather than naphtol glucosides. In vivo, seems to be involved in the malonylation of 4-methylumbelliferone glucoside or 4-nitrophenyl glucoside while PMAT1 would be involved in the malonylation of 2-Naphthol glucoside. The chain is Phenolic glucoside malonyltransferase 2 (PMAT2) from Arabidopsis thaliana (Mouse-ear cress).